A 479-amino-acid polypeptide reads, in one-letter code: ATP synthase subunit beta (479 aa).

158-165 is an ATP binding site; that stretch reads GGAGLGKT.

The protein belongs to the ATPase alpha/beta chains family. In terms of assembly, F-type ATPases have 2 components, CF(1) - the catalytic core - and CF(0) - the membrane proton channel. CF(1) has five subunits: alpha(3), beta(3), gamma(1), delta(1), epsilon(1). CF(0) has three main subunits: a(1), b(2) and c(9-12). The alpha and beta chains form an alternating ring which encloses part of the gamma chain. CF(1) is attached to CF(0) by a central stalk formed by the gamma and epsilon chains, while a peripheral stalk is formed by the delta and b chains.

Its subcellular location is the cell inner membrane. It catalyses the reaction ATP + H2O + 4 H(+)(in) = ADP + phosphate + 5 H(+)(out). In terms of biological role, produces ATP from ADP in the presence of a proton gradient across the membrane. The catalytic sites are hosted primarily by the beta subunits. The sequence is that of ATP synthase subunit beta from Rhodopirellula baltica (strain DSM 10527 / NCIMB 13988 / SH1).